Consider the following 411-residue polypeptide: Probable G-protein coupled receptor AH9.1 (411 aa).

Topologically, residues 1–18 (MLLFLLRRIFDCRYKYKL) are cytoplasmic. The helical transmembrane segment at 19 to 39 (FVKALVLFLTIVYNAGLVHFF) threads the bilayer. The Extracellular portion of the chain corresponds to 40–55 (FRTTSLDDSPEMNHVD). Residues 56–76 (YVAHVIVMPIVLSIGMINQCL) traverse the membrane as a helical segment. Residues 77-87 (NVCTLLHIRTS) lie on the Cytoplasmic side of the membrane. The chain crosses the membrane as a helical span at residues 88–108 (IFLYLKASAIADILSIVAFIP). At 109-131 (FLFRHAKLIDPSWELGMFYHAHL) the chain is on the extracellular side. A helical transmembrane segment spans residues 132–152 (ELPLINALISASALNIVAMTV). Residues 153-176 (DRYVSVCHPIKFFQNNETKPSRRR) lie on the Cytoplasmic side of the membrane. A helical membrane pass occupies residues 177-197 (TMLIIVMIYFIALMIYFPSVF). At 198 to 229 (QKKLGVVTDALTNKTIYTIVRNEDVEALQVFK) the chain is on the extracellular side. The N-linked (GlcNAc...) asparagine glycan is linked to Asn210. A helical transmembrane segment spans residues 230–250 (FYLIVRECICRWGPVLLLVIL). At 251–299 (NMCVVRGLRKIDKRNWFWRQPSQNSRTETLAQRQLRSPRDDRSRISVLL) the chain is on the cytoplasmic side. A helical transmembrane segment spans residues 300–320 (FVTSATFIICNIPASVISFFV). The Extracellular segment spans residues 321-333 (RRVSGSLFWQIFR). A helical membrane pass occupies residues 334-354 (AIANLLQVTSYLYNFYLYALC). Residues 355-411 (SSEYRHAFLRLFGCRSSLSPTSTGDSPTVRVSVHGKRCHQAVVLLGNENHENPVDEV) lie on the Cytoplasmic side of the membrane.

The protein belongs to the G-protein coupled receptor 1 family.

It localises to the cell membrane. Functionally, not known. Putative receptor. This Caenorhabditis elegans protein is Probable G-protein coupled receptor AH9.1.